The following is a 409-amino-acid chain: Nucleoprotein (409 aa).

4 disordered regions span residues 1 to 32 (MASGKATGKTDAPAPVIKLGGPRPPKVGSSGN), 44 to 69 (LNSPQPKFEGSGVPDNENLKTSQQHG), 121 to 194 (ADVK…GSED), and 238 to 259 (VDQVFGPRTKGKEGNFGDDKMN). An RNA-binding region spans residues 29–160 (SSGNASWFQA…GNFRWDFIPL (132 aa)). In terms of domain architecture, CoV N NTD spans 31 to 156 (GNASWFQAIK…GGPDGNFRWD (126 aa)). Positions 162–179 (RGRSGRSTAASSAASSRP) are enriched in low complexity. Basic and acidic residues-rich tracts occupy residues 180 to 192 (PSREGSRGRRSGS) and 247 to 259 (KGKEGNFGDDKMN). Phosphoserine; by host occurs at positions 190 and 192. Residues 215-331 (TKAKADEMAH…QCVDGVGTRP (117 aa)) enclose the CoV N CTD domain. Positions 226–333 (RYCKRTIPPG…VDGVGTRPKD (108 aa)) are dimerization. The cysteines at positions 320 and 323 are disulfide-linked. The tract at residues 326-409 (GVGTRPKDDE…GDSALGENEL (84 aa)) is disordered. A compositionally biased stretch (low complexity) spans 341-356 (RSSSRPATRTSSPAPR). The span at 358 to 367 (QRLKKEKRPK) shows a compositional bias: basic residues. Residues 368–384 (KQDDEVDKALTSDEERN) are compositionally biased toward basic and acidic residues. Residue T378 is modified to Phosphothreonine; by host. S379 is modified (phosphoserine; by host).

Belongs to the gammacoronavirus nucleocapsid protein family. Homooligomer. Both monomeric and oligomeric forms interact with RNA. Interacts with protein M. Interacts with NSP3; this interaction serves to tether the genome to the newly translated replicase-transcriptase complex at a very early stage of infection. In terms of processing, ADP-ribosylated. The ADP-ribosylation is retained in the virion during infection. Phosphorylated on serine and threonine residues.

It is found in the virion. The protein resides in the host endoplasmic reticulum-Golgi intermediate compartment. The protein localises to the host Golgi apparatus. Packages the positive strand viral genome RNA into a helical ribonucleocapsid (RNP) and plays a fundamental role during virion assembly through its interactions with the viral genome and membrane protein M. Plays an important role in enhancing the efficiency of subgenomic viral RNA transcription as well as viral replication. The polypeptide is Nucleoprotein (Gallus gallus (Chicken)).